The sequence spans 456 residues: Na(+)/H(+) antiporter NhaA 3 (456 aa).

11 consecutive transmembrane segments (helical) span residues 32 to 52 (IEATSGAVLLLATVVALTLSN), 87 to 107 (GLMTLFFFIVALEIKREVVLG), 114 to 134 (MVALSVVAAAGGMLVPMGLYL), 145 to 165 (GWGVVMPTDTAFVIGCLALLG), 174 to 194 (VFLLSLAVVDDLAAILVVAVG), 202 to 222 (TALALGAVGLVIIRGMALLGV), 233 to 253 (AIIWLAVNASGIHATIVGVIL), 318 to 338 (WVAFGVMPLFALANAGVPITI), 347 to 367 (LAVMAGFVLGKPIGVTAFAWL), 382 to 402 (WGGLVGGALLTGIGFTMALFI), and 417 to 437 (LGILAASVVSSVAGLTLLCAL).

This sequence belongs to the NhaA Na(+)/H(+) (TC 2.A.33) antiporter family.

It is found in the cell inner membrane. The catalysed reaction is Na(+)(in) + 2 H(+)(out) = Na(+)(out) + 2 H(+)(in). Its function is as follows. Na(+)/H(+) antiporter that extrudes sodium in exchange for external protons. This is Na(+)/H(+) antiporter NhaA 3 from Acidiphilium cryptum (strain JF-5).